The sequence spans 348 residues: Hereditary hemochromatosis protein homolog (348 aa).

Residues 1-22 (MGPRARPALFFLILLRTVAAQG) form the signal peptide. The interval 23–114 (RPPRSHSLRY…IMDNHNHSKE (92 aa)) is alpha-1. The Extracellular portion of the chain corresponds to 23 to 306 (RPPRSHSLRY…WEPSLSNTLV (284 aa)). N110, N130, and N234 each carry an N-linked (GlcNAc...) asparagine glycan. Positions 115–205 (SHTLQVILGC…ELGRGVLDQQ (91 aa)) are alpha-2. 2 disulfides stabilise this stretch: C124–C187 and C225–C282. Positions 206–297 (VPPLVKVTHH…GLDQPLTATW (92 aa)) are alpha-3. One can recognise an Ig-like C1-type domain in the interval 207 to 296 (PPLVKVTHHV…PGLDQPLTAT (90 aa)). Residues 298-306 (EPSLSNTLV) form a connecting peptide region. Residues 307–330 (TGVISGIAVCVIIFLIGILFRILR) form a helical membrane-spanning segment. The Cytoplasmic portion of the chain corresponds to 331–348 (KRQASRGAMGDYVLAECE).

Belongs to the MHC class I family. In terms of assembly, binds TFR through the extracellular domain in a pH-dependent manner.

It is found in the cell membrane. Functionally, binds to transferrin receptor (TFR) and reduces its affinity for iron-loaded transferrin. The sequence is that of Hereditary hemochromatosis protein homolog (HFE) from Rhinoceros unicornis (Greater Indian rhinoceros).